Consider the following 558-residue polypeptide: Serine palmitoyltransferase 1 (558 aa).

Residues 1 to 49 (MAHIPEVLPKSIPIPAFIVTTSSYLWYYFNLVLTQIPGGQFIVSYIKKS) are Lumenal-facing. The helical transmembrane segment at 50–84 (HHDDPYRTTVEIGLILYGIIYYLSKPQQKKSLQAQ) threads the bilayer. The Cytoplasmic segment spans residues 85–341 (KPNLSPQEID…GRGLSEHFNM (257 aa)). Phosphothreonine is present on Thr121. Residues 342–371 (DRATAIDITVGSMATALGSTGGFVLGDSVM) form a helical membrane-spanning segment. At 372–424 (CLHQRIGSNAYCFSACLPAYTVTSVSKVLKLMDSNNDAVQTLQKLSKSLHDSF) the chain is on the lumenal side. A helical membrane pass occupies residues 425 to 457 (ASDDSLRSYVIVTSSPVSAVLHLQLTPAYRSRK). At 458 to 558 (FGYTCEQLFE…ILACCQESNK (101 aa)) the chain is on the cytoplasmic side.

This sequence belongs to the class-II pyridoxal-phosphate-dependent aminotransferase family. In terms of assembly, LCB1 and LCB2 encode essential subunits of the enzyme and form a heterodimer. Component of the SPOTS complex, at least composed of LCB1/2 (LCB1 and/or LCB2), ORM1/2 (ORM1 and/or ORM2), SAC1 and TSC3. Interacts with LCB2 and TSC3. Pyridoxal 5'-phosphate is required as a cofactor.

Its subcellular location is the cytoplasm. The protein localises to the endoplasmic reticulum membrane. The catalysed reaction is L-serine + hexadecanoyl-CoA + H(+) = 3-oxosphinganine + CO2 + CoA. It participates in lipid metabolism; sphingolipid metabolism. Its function is as follows. Component of serine palmitoyltransferase (SPT), which catalyzes the committed step in the synthesis of sphingolipids, the condensation of serine with palmitoyl CoA to form the long chain base 3-ketosphinganine. This chain is Serine palmitoyltransferase 1 (LCB1), found in Saccharomyces cerevisiae (strain ATCC 204508 / S288c) (Baker's yeast).